We begin with the raw amino-acid sequence, 192 residues long: uncharacterized protein (192 aa).

The Nudix hydrolase domain occupies 29–160; the sequence is HRQAAVLIPI…PLDIYRRGDS (132 aa). The Nudix box motif lies at 67 to 89; that stretch reads GAVDDTDASVIAAALREAEEEVA. Residues Glu83 and Glu87 each contribute to the Mg(2+) site.

It belongs to the Nudix hydrolase family. PCD1 subfamily. The cofactor is Mn(2+). Requires Mg(2+) as cofactor.

In terms of biological role, probably mediates the hydrolysis of some nucleoside diphosphate derivatives. This is an uncharacterized protein from Shigella boydii serotype 4 (strain Sb227).